We begin with the raw amino-acid sequence, 497 residues long: RNA polymerase sigma factor SigA (497 aa).

2 disordered regions span residues 1 to 20 and 62 to 86; these read MSTDKKTLGEKPNSTKPELS and KTLHENKESDVPKKRRGRKPKHAPL. Over residues 63–73 the composition is skewed to basic and acidic residues; it reads TLHENKESDVP. Over residues 74–84 the composition is skewed to basic residues; sequence KKRRGRKPKHA. Positions 250–320 are sigma-70 factor domain-2; that stretch reads LVTSNLRLVV…TRAIADQART (71 aa). The short motif at 274–277 is the Interaction with polymerase core subunit RpoC element; it reads DLIQ. The tract at residues 329 to 410 is sigma-70 factor domain-3; the sequence is ETINRLAKAE…DTDAQTPDEF (82 aa). The segment at 423–478 is sigma-70 factor domain-4; the sequence is LLNNNLSEQEELIVRMRIGMPPYNEPKTLDEVGQKILIPREKIRQIENKAIRKLRH. The segment at residues 451 to 470 is a DNA-binding region (H-T-H motif); sequence LDEVGQKILIPREKIRQIEN.

This sequence belongs to the sigma-70 factor family. RpoD/SigA subfamily. In terms of assembly, interacts transiently with the RNA polymerase catalytic core.

The protein resides in the cytoplasm. In terms of biological role, sigma factors are initiation factors that promote the attachment of RNA polymerase to specific initiation sites and are then released. This sigma factor is the primary sigma factor during exponential growth. The polypeptide is RNA polymerase sigma factor SigA (Mycoplasma genitalium (strain ATCC 33530 / DSM 19775 / NCTC 10195 / G37) (Mycoplasmoides genitalium)).